Here is a 108-residue protein sequence, read N- to C-terminus: Iron-sulfur cluster assembly protein CyaY (108 aa).

Belongs to the frataxin family.

In terms of biological role, involved in iron-sulfur (Fe-S) cluster assembly. May act as a regulator of Fe-S biogenesis. This is Iron-sulfur cluster assembly protein CyaY from Pseudomonas paraeruginosa (strain DSM 24068 / PA7) (Pseudomonas aeruginosa (strain PA7)).